The chain runs to 405 residues: Tyrosine--tRNA ligase (405 aa).

An L-tyrosine-binding site is contributed by Tyr35. The 'HIGH' region signature appears at 40-49; that stretch reads ATSSSLHIGH. Tyr166 and Gln170 together coordinate L-tyrosine. Residues 226–230 carry the 'KMSKS' region motif; sequence KMGKS. Lys229 contributes to the ATP binding site. One can recognise an S4 RNA-binding domain in the interval 340–405; it reads ILLVDLMLDS…GKKKFLRIVI (66 aa).

It belongs to the class-I aminoacyl-tRNA synthetase family. TyrS type 1 subfamily. Homodimer.

It localises to the cytoplasm. It catalyses the reaction tRNA(Tyr) + L-tyrosine + ATP = L-tyrosyl-tRNA(Tyr) + AMP + diphosphate + H(+). Catalyzes the attachment of tyrosine to tRNA(Tyr) in a two-step reaction: tyrosine is first activated by ATP to form Tyr-AMP and then transferred to the acceptor end of tRNA(Tyr). The polypeptide is Tyrosine--tRNA ligase (Borreliella burgdorferi (strain ATCC 35210 / DSM 4680 / CIP 102532 / B31) (Borrelia burgdorferi)).